We begin with the raw amino-acid sequence, 380 residues long: Serpin B7 (380 aa).

The residue at position 217 (serine 217) is a Phosphoserine.

It belongs to the serpin family. Ov-serpin subfamily.

The protein resides in the cytoplasm. Might function as an inhibitor of Lys-specific proteases. Might influence the maturation of megakaryocytes via its action as a serpin. The protein is Serpin B7 (Serpinb7) of Mus musculus (Mouse).